A 257-amino-acid chain; its full sequence is MIEFRNVSKVYPNGTKGLNHINLKIQKGEFVVMVGLSGAGKSTLLRSVNRLHEITEGEIMIEGESITAAKGKGLRRMRRDIGMIFQSFNLVKRSTVLKNVLAGRVGYHSTLRTTLGIFPKEDLELAFQSLKRVNILEKAYARADELSGGQQQRVSIARALAQEAKIILADEPVASLDPLTTKQVLDDLKKINEDFGITTIVNLHSIDLARQYATRIIGLHAGEIVFDGLVEEATDEKFAEIYGDVAQKSELLEVAVK.

Residues 2 to 246 (IEFRNVSKVY…KFAEIYGDVA (245 aa)) enclose the ABC transporter domain. 35-42 (GLSGAGKS) contacts ATP.

It belongs to the ABC transporter superfamily. Phosphonates importer (TC 3.A.1.9.1) family. In terms of assembly, the complex is composed of two ATP-binding proteins (PhnC), two transmembrane proteins (PhnE) and a solute-binding protein (PhnD).

It is found in the cell membrane. It carries out the reaction phosphonate(out) + ATP + H2O = phosphonate(in) + ADP + phosphate + H(+). Functionally, part of the ABC transporter complex PhnCDE involved in phosphonates import. Responsible for energy coupling to the transport system. The protein is Phosphonates import ATP-binding protein PhnC of Bacillus cereus (strain ATCC 10987 / NRS 248).